A 725-amino-acid chain; its full sequence is Ribosomal RNA large subunit methyltransferase K/L (725 aa).

The THUMP domain occupies 46–157 (VAYRLCLWSR…RGEAVLSLDL (112 aa)).

The protein belongs to the methyltransferase superfamily. RlmKL family.

The protein resides in the cytoplasm. The enzyme catalyses guanosine(2445) in 23S rRNA + S-adenosyl-L-methionine = N(2)-methylguanosine(2445) in 23S rRNA + S-adenosyl-L-homocysteine + H(+). The catalysed reaction is guanosine(2069) in 23S rRNA + S-adenosyl-L-methionine = N(2)-methylguanosine(2069) in 23S rRNA + S-adenosyl-L-homocysteine + H(+). Its function is as follows. Specifically methylates the guanine in position 2445 (m2G2445) and the guanine in position 2069 (m7G2069) of 23S rRNA. The protein is Ribosomal RNA large subunit methyltransferase K/L of Ectopseudomonas mendocina (strain ymp) (Pseudomonas mendocina).